Reading from the N-terminus, the 162-residue chain is MVDPARARKLAKRIGTIVATAIDHEIKDPRLAFVTITDTKVTADLHDATVYYTVMGADLESEPDLVSAAAGLEKAKGVLRSKVGAGTGVRFTPTLTFVADTVPDTARHMEELLARARAADDEVARVAAGASPAGDPDPYKEPRVEDADDAEVDEPSRSRQAD.

The tract at residues 123 to 162 (VARVAAGASPAGDPDPYKEPRVEDADDAEVDEPSRSRQAD) is disordered. A compositionally biased stretch (low complexity) spans 125 to 136 (RVAAGASPAGDP).

Belongs to the RbfA family. Monomer. Binds 30S ribosomal subunits, but not 50S ribosomal subunits or 70S ribosomes.

It is found in the cytoplasm. Functionally, one of several proteins that assist in the late maturation steps of the functional core of the 30S ribosomal subunit. Associates with free 30S ribosomal subunits (but not with 30S subunits that are part of 70S ribosomes or polysomes). Required for efficient processing of 16S rRNA. May interact with the 5'-terminal helix region of 16S rRNA. The sequence is that of Ribosome-binding factor A from Rhodococcus opacus (strain B4).